We begin with the raw amino-acid sequence, 197 residues long: MRAATISRKTKETEIAVSVDLDGTGAATVSTGVGFFDHMLEQLARHSLIDISVAATGDLHIDQHHTVEDTGIALGQALRQALGDRAGIARYANALLPMDETLTRAAIDVSGRPFLVFKTEFRRAKIGEFDTELVREFFQAFVMNAGLTVHIETLYGENAHHIAESCFKALARALRLAIEVDPRQKGAIPSTKGSLAG.

The protein belongs to the imidazoleglycerol-phosphate dehydratase family.

Its subcellular location is the cytoplasm. It catalyses the reaction D-erythro-1-(imidazol-4-yl)glycerol 3-phosphate = 3-(imidazol-4-yl)-2-oxopropyl phosphate + H2O. It participates in amino-acid biosynthesis; L-histidine biosynthesis; L-histidine from 5-phospho-alpha-D-ribose 1-diphosphate: step 6/9. The sequence is that of Imidazoleglycerol-phosphate dehydratase from Methylocella silvestris (strain DSM 15510 / CIP 108128 / LMG 27833 / NCIMB 13906 / BL2).